The following is a 289-amino-acid chain: Acetyl-coenzyme A carboxylase carboxyl transferase subunit beta (289 aa).

In terms of domain architecture, CoA carboxyltransferase N-terminal spans 28 to 289 (LWSKCPSCEA…ALLQKLPAAA (262 aa)). Zn(2+)-binding residues include C32, C35, C51, and C54. The segment at 32–54 (CPSCEAVLYATDLENNLQVCPKC) adopts a C4-type zinc-finger fold.

The protein belongs to the AccD/PCCB family. In terms of assembly, acetyl-CoA carboxylase is a heterohexamer composed of biotin carboxyl carrier protein (AccB), biotin carboxylase (AccC) and two subunits each of ACCase subunit alpha (AccA) and ACCase subunit beta (AccD). Requires Zn(2+) as cofactor.

The protein localises to the cytoplasm. It carries out the reaction N(6)-carboxybiotinyl-L-lysyl-[protein] + acetyl-CoA = N(6)-biotinyl-L-lysyl-[protein] + malonyl-CoA. The protein operates within lipid metabolism; malonyl-CoA biosynthesis; malonyl-CoA from acetyl-CoA: step 1/1. In terms of biological role, component of the acetyl coenzyme A carboxylase (ACC) complex. Biotin carboxylase (BC) catalyzes the carboxylation of biotin on its carrier protein (BCCP) and then the CO(2) group is transferred by the transcarboxylase to acetyl-CoA to form malonyl-CoA. The protein is Acetyl-coenzyme A carboxylase carboxyl transferase subunit beta of Dechloromonas aromatica (strain RCB).